The primary structure comprises 1336 residues: Cytokinesis protein sepH (1336 aa).

The segment covering 1 to 10 has biased composition (low complexity); that stretch reads MVSRSSETSE. Residues 1 to 46 form a disordered region; it reads MVSRSSETSEGPPPPSKIPGTPAKTRLSRLNSSPAKQDKPKDDRVV. Basic and acidic residues predominate over residues 36-46; that stretch reads KQDKPKDDRVV. The Protein kinase domain occupies 59 to 309; the sequence is YQLGDCLGKG…ARKLLKHPWI (251 aa). ATP is bound by residues 65–73 and lysine 88; that span reads LGKGAFGSV. The active-site Proton acceptor is the aspartate 181. The interval 368–402 is disordered; that stretch reads SRYTPTKDILPSPVSKHVTDRFRSPDSTEEDNWDD. The span at 384–393 shows a compositional bias: basic and acidic residues; sequence HVTDRFRSPD. The stretch at 654 to 682 forms a coiled coil; the sequence is AQLEEGLDEVDLEANIARDKYARLRGQVE. Residues 1194-1205 are compositionally biased toward basic and acidic residues; it reads ERSESFSLEKRK. A disordered region spans residues 1194 to 1336; it reads ERSESFSLEK…PTHADSDWAS (143 aa). The span at 1213–1236 shows a compositional bias: polar residues; the sequence is TSTTPPGYLANQSAPATPQINRFN. Composition is skewed to low complexity over residues 1253-1264 and 1272-1285; these read PSLSSSALALRP and PSLS…AGPS. The span at 1315–1327 shows a compositional bias: basic residues; that stretch reads SRRRSILPQRRRP.

The protein belongs to the protein kinase superfamily. Ser/Thr protein kinase family. CDC7 subfamily. Mg(2+) serves as cofactor.

It carries out the reaction L-seryl-[protein] + ATP = O-phospho-L-seryl-[protein] + ADP + H(+). It catalyses the reaction L-threonyl-[protein] + ATP = O-phospho-L-threonyl-[protein] + ADP + H(+). Functionally, required for early events during cytokinesis including localization of cytoskeletal components to the cytokinetic ring. This is Cytokinesis protein sepH from Aspergillus niger (strain ATCC MYA-4892 / CBS 513.88 / FGSC A1513).